Consider the following 218-residue polypeptide: MSAIALGMIIFAYLCGSISSAILICRLAGLPDPRQHGSGNPGATNVLRIGGRSTAAIVLICDVLKGMIPVWLAYQLYVPPFYLGITAIAACLGHIYPIFFQFKGGKGVATAFGAIAAIGWDLTGLMMGTWLLTILLSGYSSLGAIVSALIAPFYVWWFKPEFTFPVAMLCCLVLLRHHDNIQRLWRGQENRLWNKLKKKKEMTEKEKKRTEKEQRKED.

Transmembrane regions (helical) follow at residues 4–24, 54–74, 80–100, 107–127, and 130–150; these read IALGMIIFAYLCGSISSAILI, TAAIVLICDVLKGMIPVWLAY, PFYLGITAIAACLGHIYPIFF, GVATAFGAIAAIGWDLTGLMM, and WLLTILLSGYSSLGAIVSALI.

Belongs to the PlsY family. Probably interacts with PlsX.

The protein localises to the cell inner membrane. It carries out the reaction an acyl phosphate + sn-glycerol 3-phosphate = a 1-acyl-sn-glycero-3-phosphate + phosphate. Its pathway is lipid metabolism; phospholipid metabolism. Catalyzes the transfer of an acyl group from acyl-phosphate (acyl-PO(4)) to glycerol-3-phosphate (G3P) to form lysophosphatidic acid (LPA). This enzyme utilizes acyl-phosphate as fatty acyl donor, but not acyl-CoA or acyl-ACP. The polypeptide is Glycerol-3-phosphate acyltransferase (Photorhabdus laumondii subsp. laumondii (strain DSM 15139 / CIP 105565 / TT01) (Photorhabdus luminescens subsp. laumondii)).